A 365-amino-acid polypeptide reads, in one-letter code: Patr class I histocompatibility antigen, A-2 alpha chain (365 aa).

Residues 1–24 form the signal peptide; it reads MAVMPPRTLLLLLSGALALTQTWA. An alpha-1 region spans residues 25–114; that stretch reads GSHSMRYFFT…LRGYYNQSED (90 aa). At 25–308 the chain is on the extracellular side; that stretch reads GSHSMRYFFT…EPSSQPTIPI (284 aa). Asn-110 is a glycosylation site (N-linked (GlcNAc...) asparagine). The alpha-2 stretch occupies residues 115-206; the sequence is GSHTIQIMYG…ENGKETLQRT (92 aa). Disulfide bonds link Cys-125-Cys-188 and Cys-227-Cys-283. The interval 207-298 is alpha-3; that stretch reads DPPKTHMTHH…GLPKPLTLRW (92 aa). In terms of domain architecture, Ig-like C1-type spans 209-295; that stretch reads PKTHMTHHPI…QHEGLPKPLT (87 aa). The tract at residues 299-308 is connecting peptide; sequence EPSSQPTIPI. Residues 309 to 332 traverse the membrane as a helical segment; the sequence is VGIIAGLVLLGAVITGAVVAAVMW. The Cytoplasmic segment spans residues 333-365; it reads RRKSSDRKGGSYTQAASSDSAQGSDVSLTACKV. Positions 339–360 are disordered; that stretch reads RKGGSYTQAASSDSAQGSDVSL. A Phosphoserine modification is found at Ser-343. Tyr-344 bears the Phosphotyrosine mark. Positions 346-359 are enriched in low complexity; the sequence is QAASSDSAQGSDVS. Phosphoserine occurs at positions 349, 350, 352, 356, and 359.

The protein belongs to the MHC class I family. As to quaternary structure, heterodimer of an alpha chain and a beta chain (beta-2-microglobulin).

Its subcellular location is the membrane. Functionally, involved in the presentation of foreign antigens to the immune system. The polypeptide is Patr class I histocompatibility antigen, A-2 alpha chain (Pan troglodytes (Chimpanzee)).